The following is a 91-amino-acid chain: DNA-binding protein HU (91 aa).

It belongs to the bacterial histone-like protein family.

In terms of biological role, histone-like DNA-binding protein which is capable of wrapping DNA to stabilize it, and thus to prevent its denaturation under extreme environmental conditions. Also seems to act as a fortuitous virulence factor in delayed sequelae by binding to heparan sulfate-proteoglycans in the extracellular matrix of target organs and acting as a nidus for in situ immune complex formation. The chain is DNA-binding protein HU (hup) from Streptococcus gordonii.